Consider the following 658-residue polypeptide: Protein translocase subunit SecA 3 (658 aa).

Residues glutamine 111, 129–133, and aspartate 536 each bind ATP; that span reads GEGKT.

It belongs to the SecA family. Monomer and homodimer. Part of the essential Sec protein translocation apparatus which comprises SecA, SecYEG and auxiliary proteins SecDF-YajC and YidC.

Its subcellular location is the cell inner membrane. The protein localises to the cytoplasm. It catalyses the reaction ATP + H2O + cellular proteinSide 1 = ADP + phosphate + cellular proteinSide 2.. Functionally, part of the Sec protein translocase complex. Interacts with the SecYEG preprotein conducting channel. Has a central role in coupling the hydrolysis of ATP to the transfer of proteins into and across the cell membrane, serving both as a receptor for the preprotein-SecB complex and as an ATP-driven molecular motor driving the stepwise translocation of polypeptide chains across the membrane. This chain is Protein translocase subunit SecA 3, found in Magnetococcus marinus (strain ATCC BAA-1437 / JCM 17883 / MC-1).